The following is a 461-amino-acid chain: UDP-N-acetylmuramoylalanine--D-glutamate ligase (461 aa).

Residue 123-129 (GTNGKTT) participates in ATP binding.

It belongs to the MurCDEF family.

Its subcellular location is the cytoplasm. It catalyses the reaction UDP-N-acetyl-alpha-D-muramoyl-L-alanine + D-glutamate + ATP = UDP-N-acetyl-alpha-D-muramoyl-L-alanyl-D-glutamate + ADP + phosphate + H(+). Its pathway is cell wall biogenesis; peptidoglycan biosynthesis. Its function is as follows. Cell wall formation. Catalyzes the addition of glutamate to the nucleotide precursor UDP-N-acetylmuramoyl-L-alanine (UMA). The polypeptide is UDP-N-acetylmuramoylalanine--D-glutamate ligase (Natranaerobius thermophilus (strain ATCC BAA-1301 / DSM 18059 / JW/NM-WN-LF)).